The sequence spans 669 residues: Cytokinesis protein 2 (669 aa).

Residues 1 to 261 enclose the F-BAR domain; that stretch reads MSYSYEACFW…HLNSFTAADE (261 aa). A coiled-coil region spans residues 134–200; that stretch reads KKGCEVLQKK…LKQEYKASQK (67 aa). Residues serine 337 and serine 366 each carry the phosphoserine modification. The segment at 372–518 is disordered; sequence VQLQSNVDDS…DYNTRRDTST (147 aa). Composition is skewed to basic and acidic residues over residues 381 to 391 and 397 to 413; these read SVLRQKPDKPR and EQLK…EKGL. Serine 421 is modified (phosphoserine). 2 stretches are compositionally biased toward low complexity: residues 421–431 and 445–455; these read SLSSPSESSSS and MESMTTSVSSM. The SH3 domain occupies 599 to 667; the sequence is PVIEYAKAMY…PYNFIQLLHQ (69 aa).

Interacts with INN1.

The protein resides in the cytoplasm. Its subcellular location is the cytoskeleton. It is found in the bud neck. In terms of biological role, throughout most of the cell cycle it forms a double ring that coincides with the septins. After the onset of mitosis, forms a ring-like structure which colocalizes with the medial actin ring. Mediates cytoskeletal rearrangements required for cytokinesis. In conjunction with the medial actin ring exhibits contraction-like action. The polypeptide is Cytokinesis protein 2 (HOF1) (Saccharomyces cerevisiae (strain ATCC 204508 / S288c) (Baker's yeast)).